The primary structure comprises 107 residues: N(4)-acetylcytidine amidohydrolase (107 aa).

An ASCH domain is found at 6–102 (TFYRRFQADI…RLYVISFSLV (97 aa)). Lysine 20 (proton acceptor) is an active-site residue. Threonine 23 acts as the Nucleophile in catalysis. Glutamate 73 acts as the Proton donor in catalysis.

Belongs to the N(4)-acetylcytidine amidohydrolase family.

It carries out the reaction N(4)-acetylcytidine + H2O = cytidine + acetate + H(+). The catalysed reaction is N(4)-acetyl-2'-deoxycytidine + H2O = 2'-deoxycytidine + acetate + H(+). The enzyme catalyses N(4)-acetylcytosine + H2O = cytosine + acetate + H(+). Catalyzes the hydrolysis of N(4)-acetylcytidine (ac4C). The protein is N(4)-acetylcytidine amidohydrolase of Edwardsiella ictaluri (strain 93-146).